Reading from the N-terminus, the 476-residue chain is MTLRIYNTLTKQKEEFKPINEGEVRMYVCGPTVYDYPHLGHARTYIAFDVIRRYLEHKGYSVLMVMNFTDIDDKIIRRAKETGEDPAKLAEKFIKVFLEDMKALKVKPADIYPRVTEHIEDIIQFIERLKEKGYAYEGSDGVYFEVQKFKEYGKLSGVKLEELRKGARVEPGEGKKNPEDFALWKKAKPGEPKWESPWGEGRPGWHIECSVMSSKYLGESFDIHGGGNDLIFPHHENEIAQSEACFGHEWVHYWLHTGFVMVKGEKMSKSLGNFVTVRELLQRYSPEVIRFFVLQKHYRSPLDYSEEGLQHAKNNLERLYNTLENIRIAMENAELAYTWDENDFKAYNSIKEARRKFYEAMDDDFNTAEALKAVFEVSNAINKYITEAEKPKESVLRKAWEFFRTVGEIFGIFEEYFKEEKAKEEEKLIELLIQVRAELRKERKFELADKIREELRKLGIQLEDKGKETIWKRIKV.

Cys-29 is a Zn(2+) binding site. The 'HIGH' region signature appears at 31 to 41 (PTVYDYPHLGH). Residues Cys-209, His-234, and Glu-238 each contribute to the Zn(2+) site. The 'KMSKS' region motif lies at 266-270 (KMSKS). Lys-269 is a binding site for ATP.

It belongs to the class-I aminoacyl-tRNA synthetase family. Zn(2+) serves as cofactor.

The protein localises to the cytoplasm. The enzyme catalyses tRNA(Cys) + L-cysteine + ATP = L-cysteinyl-tRNA(Cys) + AMP + diphosphate. This is Cysteine--tRNA ligase (cysS) from Pyrococcus horikoshii (strain ATCC 700860 / DSM 12428 / JCM 9974 / NBRC 100139 / OT-3).